A 619-amino-acid chain; its full sequence is Serine/threonine-protein kinase pkn1 (619 aa).

Positions 15–302 (YRILYRKGQS…SSQNLPQAVL (288 aa)) constitute a Protein kinase domain. An ATP-binding site is contributed by 21 to 29 (KGQSLWSED). The active-site Proton acceptor is the Glu-141.

Belongs to the protein kinase superfamily. Ser/Thr protein kinase family. Autophosphorylated on serine and threonine residues.

The enzyme catalyses L-seryl-[protein] + ATP = O-phospho-L-seryl-[protein] + ADP + H(+). The catalysed reaction is L-threonyl-[protein] + ATP = O-phospho-L-threonyl-[protein] + ADP + H(+). In terms of biological role, together with the serine/threonine kinase PknD, may play a role in the specific interactions with host proteins during intracellular growth. This chain is Serine/threonine-protein kinase pkn1 (pkn1), found in Chlamydia pneumoniae (Chlamydophila pneumoniae).